The chain runs to 57 residues: Light-harvesting protein B-808/866 alpha chain (57 aa).

N-formylmethionine is present on methionine 1. Over 1-10 (MQPRSPVRTN) the chain is Cytoplasmic. A helical transmembrane segment spans residues 11-30 (IVIFTILGFVVALLIHFIVL). Position 26 (histidine 26) interacts with a bacteriochlorophyll. The Periplasmic portion of the chain corresponds to 31-57 (SSPEYNWLSNAEGGALLLSAARALFGI).

The protein belongs to the antenna complex alpha subunit family. In terms of assembly, the core complex is formed by different alpha and beta chains, binding bacteriochlorophyll molecules, and arranged most probably in tetrameric structures disposed around the reaction center. The non-pigmented gamma chains may constitute additional components.

The protein localises to the cell membrane. In terms of biological role, antenna complexes are light-harvesting systems, which transfer the excitation energy to the reaction centers. This is Light-harvesting protein B-808/866 alpha chain (puf2A) from Chloroflexus aurantiacus (strain ATCC 29366 / DSM 635 / J-10-fl).